Reading from the N-terminus, the 224-residue chain is DNA mismatch repair protein MutH (224 aa).

Belongs to the MutH family.

It is found in the cytoplasm. In terms of biological role, sequence-specific endonuclease that cleaves unmethylated GATC sequences. It is involved in DNA mismatch repair. In Histophilus somni (strain 2336) (Haemophilus somnus), this protein is DNA mismatch repair protein MutH.